Reading from the N-terminus, the 347-residue chain is Phosphoribosylformylglycinamidine cyclo-ligase (347 aa).

The protein belongs to the AIR synthase family.

The protein resides in the cytoplasm. The enzyme catalyses 2-formamido-N(1)-(5-O-phospho-beta-D-ribosyl)acetamidine + ATP = 5-amino-1-(5-phospho-beta-D-ribosyl)imidazole + ADP + phosphate + H(+). Its pathway is purine metabolism; IMP biosynthesis via de novo pathway; 5-amino-1-(5-phospho-D-ribosyl)imidazole from N(2)-formyl-N(1)-(5-phospho-D-ribosyl)glycinamide: step 2/2. In Yersinia pseudotuberculosis serotype O:1b (strain IP 31758), this protein is Phosphoribosylformylglycinamidine cyclo-ligase.